The primary structure comprises 283 residues: 5'-nucleotidase SurE (283 aa).

Residues aspartate 14, aspartate 15, serine 47, and asparagine 105 each contribute to the a divalent metal cation site.

It belongs to the SurE nucleotidase family. The cofactor is a divalent metal cation.

The protein localises to the cytoplasm. It catalyses the reaction a ribonucleoside 5'-phosphate + H2O = a ribonucleoside + phosphate. Its function is as follows. Nucleotidase that shows phosphatase activity on nucleoside 5'-monophosphates. In Chlamydia trachomatis serovar A (strain ATCC VR-571B / DSM 19440 / HAR-13), this protein is 5'-nucleotidase SurE.